The primary structure comprises 226 residues: 2,3-bisphosphoglycerate-dependent phosphoglycerate mutase (226 aa).

Substrate-binding positions include 8 to 15, 21 to 22, Arg58, 112 to 115, Lys123, 139 to 140, and 183 to 184; these read RHGQSQWN, TG, ERMY, RR, and GN. Catalysis depends on His9, which acts as the Tele-phosphohistidine intermediate. The active-site Proton donor/acceptor is the Glu112.

This sequence belongs to the phosphoglycerate mutase family. BPG-dependent PGAM subfamily.

The enzyme catalyses (2R)-2-phosphoglycerate = (2R)-3-phosphoglycerate. It functions in the pathway carbohydrate degradation; glycolysis; pyruvate from D-glyceraldehyde 3-phosphate: step 3/5. In terms of biological role, catalyzes the interconversion of 2-phosphoglycerate and 3-phosphoglycerate. The chain is 2,3-bisphosphoglycerate-dependent phosphoglycerate mutase from Protochlamydia amoebophila (strain UWE25).